The primary structure comprises 207 residues: Ribonuclease HII (207 aa).

The 190-residue stretch at 12–201 (DLVAGVDEVG…VRAAWEAREG (190 aa)) folds into the RNase H type-2 domain. A divalent metal cation contacts are provided by Asp-18, Glu-19, and Asp-110.

This sequence belongs to the RNase HII family. Requires Mn(2+) as cofactor. Mg(2+) serves as cofactor.

The protein resides in the cytoplasm. It carries out the reaction Endonucleolytic cleavage to 5'-phosphomonoester.. Functionally, endonuclease that specifically degrades the RNA of RNA-DNA hybrids. The protein is Ribonuclease HII of Pseudomonas putida (strain W619).